The sequence spans 328 residues: D-cysteine desulfhydrase (328 aa).

Lysine 51 is subject to N6-(pyridoxal phosphate)lysine.

This sequence belongs to the ACC deaminase/D-cysteine desulfhydrase family. In terms of assembly, homodimer. The cofactor is pyridoxal 5'-phosphate.

The catalysed reaction is D-cysteine + H2O = hydrogen sulfide + pyruvate + NH4(+) + H(+). Functionally, catalyzes the alpha,beta-elimination reaction of D-cysteine and of several D-cysteine derivatives. It could be a defense mechanism against D-cysteine. The chain is D-cysteine desulfhydrase from Salmonella paratyphi C (strain RKS4594).